A 388-amino-acid polypeptide reads, in one-letter code: Galactokinase (388 aa).

A substrate-binding site is contributed by 33–36; the sequence is EHTD. ATP-binding positions include Ser67 and 125–131; that span reads GSGLSSS. The Mg(2+) site is built by Ser131 and Glu163. The Proton acceptor role is filled by Asp175. Residue Tyr225 participates in substrate binding.

Belongs to the GHMP kinase family. GalK subfamily.

Its subcellular location is the cytoplasm. It catalyses the reaction alpha-D-galactose + ATP = alpha-D-galactose 1-phosphate + ADP + H(+). It functions in the pathway carbohydrate metabolism; galactose metabolism. In terms of biological role, catalyzes the transfer of the gamma-phosphate of ATP to D-galactose to form alpha-D-galactose-1-phosphate (Gal-1-P). The chain is Galactokinase from Lactobacillus helveticus (Lactobacillus suntoryeus).